The chain runs to 105 residues: Small ribosomal subunit protein uS10 (105 aa).

This sequence belongs to the universal ribosomal protein uS10 family. As to quaternary structure, part of the 30S ribosomal subunit.

Involved in the binding of tRNA to the ribosomes. The sequence is that of Small ribosomal subunit protein uS10 from Solidesulfovibrio magneticus (strain ATCC 700980 / DSM 13731 / RS-1) (Desulfovibrio magneticus).